Consider the following 231-residue polypeptide: MAEEKELVLLDFWVSPFGQRCRIAMAEKGLEFEYREEDLGNKSDLLLRSNPVHRKIPVLLHAGRPVSESLVILQYLDDAFPGTPHLLPPANSGDADAAYARATARFWADYVDRKLYDCGSRLWRLKGEPQAAAGREMAEILRTLEAELGDREFFGGGGGGRLGFVDVALVPFTAWFYSYERCGGFSVEEVAPRLAAWARRCGRIDSVVKHLPSPEKVYDFVGVLKKKYGVE.

The GST N-terminal domain maps to 5–84; it reads KELVLLDFWV…YLDDAFPGTP (80 aa). Glutathione contacts are provided by residues Ser15, Lys42, Ile56, and 68–69; that span reads ES. A GST C-terminal domain is found at 97–220; it reads AAYARATARF…LPSPEKVYDF (124 aa).

The protein belongs to the GST superfamily. Tau family.

The catalysed reaction is RX + glutathione = an S-substituted glutathione + a halide anion + H(+). Conjugation of reduced glutathione to a wide number of exogenous and endogenous hydrophobic electrophiles. In Oryza sativa subsp. japonica (Rice), this protein is Probable glutathione S-transferase GSTU1 (GSTU1).